A 66-amino-acid polypeptide reads, in one-letter code: Large ribosomal subunit protein bL33c (66 aa).

It belongs to the bacterial ribosomal protein bL33 family.

Its subcellular location is the plastid. The protein localises to the chloroplast. This Barbarea verna (Land cress) protein is Large ribosomal subunit protein bL33c.